The following is a 770-amino-acid chain: Protein PAT1 homolog 1 (770 aa).

A disordered region spans residues 1-42; the sequence is MFRYESLEDCPLDEDEDAFQGLGEEDEEIDQFNDDTFGSGAV. The tract at residues 1–84 is region A; interaction with DDX6/RCK; it reads MFRYESLEDC…EMDLLGDHEE (84 aa). An involved in nuclear foci localization region spans residues 1–397; it reads MFRYESLEDC…HQSSHQDHLR (397 aa). Residues 7-33 show a composition bias toward acidic residues; that stretch reads LEDCPLDEDEDAFQGLGEEDEEIDQFN. The segment at 85-388 is region N; interaction with decapping machinery; sequence NLAERLSKMV…LNGTGDRGGH (304 aa). The Nuclear export signal motif lies at 86–95; the sequence is LAERLSKMVI. A disordered region spans residues 155 to 195; sequence PQRPLQGPEDDRDLSERALPRRSTSPIIGSPPVRAVPIGTP. Residue serine 177 is modified to Phosphoserine. Residue threonine 178 is modified to Phosphothreonine. A phosphoserine mark is found at serine 179 and serine 184. Residue threonine 194 is modified to Phosphothreonine. Residues arginine 217, arginine 223, and arginine 263 each carry the asymmetric dimethylarginine modification. The tract at residues 223 to 397 is involved in RNA-binding; the sequence is RYPAPYGERI…HQSSHQDHLR (175 aa). Phosphoserine is present on serine 278. The residue at position 284 (arginine 284) is an Asymmetric dimethylarginine. 2 disordered regions span residues 319–340 and 376–396; these read FSAPPPATPPPQQHPPGPGPHL and HRNLNGTGDRGGHQSSHQDHL. Residues 321-337 are compositionally biased toward pro residues; that stretch reads APPPATPPPQQHPPGPG. Residue arginine 385 is modified to Omega-N-methylarginine. Over residues 385 to 396 the composition is skewed to basic and acidic residues; the sequence is RGGHQSSHQDHL. The segment at 389 to 448 is region H; sequence QSSHQDHLRKDPYANLMLQREKDWVSKIQMMQLQSTDPYLDDFYYQNYFEKLEKLSAAEE. Residues 398–770 are involved in nuclear speckle localization; it reads KDPYANLMLQ…TKLQLVQGIR (373 aa). The segment at 449-770 is region C; the sequence is IQGDGPKKER…TKLQLVQGIR (322 aa).

The protein belongs to the PAT1 family. Interacts (via region A) with DDX6/RCK. Interacts (via region H and region C) with LSM1 and LSM4. Interacts (via region N) with DCP1A, DCP2, EDC3, EDC4 and XRN1. Interacts with the CCR4-NOT complex. Interacts with the Lsm-containing SMN-Sm protein complex. Interacts with EIF4ENIF1/4E-T.

Its subcellular location is the cytoplasm. It is found in the P-body. It localises to the nucleus. The protein localises to the PML body. The protein resides in the nucleus speckle. RNA-binding protein involved in deadenylation-dependent decapping of mRNAs, leading to the degradation of mRNAs. Acts as a scaffold protein that connects deadenylation and decapping machinery. Required for cytoplasmic mRNA processing body (P-body) assembly. This Mus musculus (Mouse) protein is Protein PAT1 homolog 1 (Patl1).